Reading from the N-terminus, the 396-residue chain is Acetate kinase (396 aa).

Position 7 (Asn7) interacts with Mg(2+). Lys14 lines the ATP pocket. Arg91 lines the substrate pocket. The Proton donor/acceptor role is filled by Asp148. ATP is bound by residues 208 to 212, 283 to 285, and 331 to 335; these read HLGNG, DFR, and GLGEN. Glu384 contributes to the Mg(2+) binding site.

The protein belongs to the acetokinase family. Homodimer. Mg(2+) is required as a cofactor. Requires Mn(2+) as cofactor.

It is found in the cytoplasm. The enzyme catalyses acetate + ATP = acetyl phosphate + ADP. It functions in the pathway metabolic intermediate biosynthesis; acetyl-CoA biosynthesis; acetyl-CoA from acetate: step 1/2. Functionally, catalyzes the formation of acetyl phosphate from acetate and ATP. Can also catalyze the reverse reaction. The sequence is that of Acetate kinase from Alkaliphilus metalliredigens (strain QYMF).